A 3108-amino-acid chain; its full sequence is Probable polyketide synthase 39 (3108 aa).

One can recognise a Ketosynthase family 3 (KS3) domain in the interval 9 to 440 (DDDVAVIGIG…GSNVCLILSE (432 aa)). Active-site for beta-ketoacyl synthase activity residues include C181, H320, and H363. Residues 643 to 676 (GVSADIIIGHSLGEISSAYCSGMIDFQTLCYLTY) are acyl/malonyl transferase. The active-site For acyl/malonyl transferase activity is the S653. Residues 939 to 1068 (HEKIKSEGPS…GNFSLFKHNI (130 aa)) form an N-terminal hotdog fold region. Positions 939–1265 (HEKIKSEGPS…CTIAASNPDS (327 aa)) constitute a PKS/mFAS DH domain. The active-site Proton acceptor; for dehydratase activity is the H980. Residues 1085-1265 (NFTSISKQDL…CTIAASNPDS (181 aa)) form a C-terminal hotdog fold region. D1157 (proton donor; for dehydratase activity) is an active-site residue. Residues 1375–1435 (NNNNNNNNNN…NNNNNNNNNN (61 aa)) form a disordered region. The region spanning 2566 to 2643 (GNNEIIHSTI…QSIEIIKSAL (78 aa)) is the Carrier domain. S2603 bears the O-(pantetheine 4'-phosphoryl)serine mark. The helical transmembrane segment at 2702–2722 (IFLTGSTGFLGAYLLMELIKM) threads the bilayer.

Pantetheine 4'-phosphate serves as cofactor.

The protein resides in the membrane. Its function is as follows. Probable polyketide synthase. In Dictyostelium discoideum (Social amoeba), this protein is Probable polyketide synthase 39 (pks39).